A 92-amino-acid chain; its full sequence is UPF0213 protein MGAS9429_Spy1198 (92 aa).

One can recognise a GIY-YIG domain in the interval 4 to 80 (KKAYMYVLEC…KRKTRSQKLA (77 aa)).

It belongs to the UPF0213 family.

The chain is UPF0213 protein MGAS9429_Spy1198 from Streptococcus pyogenes serotype M12 (strain MGAS9429).